The primary structure comprises 492 residues: FAD-containing monooxygenase EthA (492 aa).

FAD contacts are provided by residues serine 15, glutamate 36, 44 to 47 (TWDL), aspartate 56, and valine 104. An NADP(+)-binding site is contributed by 54–56 (RSD). Residues 183–189 (SGATAVT) and 207–208 (RS) each bind NADP(+).

This sequence belongs to the FAD-binding monooxygenase family. FAD is required as a cofactor.

The protein resides in the cell membrane. It carries out the reaction ethionamide + NADPH + O2 + H(+) = ethionamide S-oxide + NADP(+) + H2O. Functionally, monooxygenase able to convert a wide range of ketones to the corresponding esters or lactones via a Baeyer-Villiger oxidation reaction. Can act on long-chain aliphatic ketones (2-hexanone to 2-dodecanone) and on aromatic ketones (phenylacetone and benzylacetone). Is also able to catalyze enantioselective sulfoxidation of methyl-p-tolylsulfide. In vivo, likely functions as a BVMO, but the exact nature of the physiological substrate(s) remains to be established. Its function is as follows. Is responsible for the activation of several thiocarbamide-containing pro-drugs, such as ethionamide (ETH), isoxyl (ISO) and thiacetazone (TAC), into reactive species. The chain is FAD-containing monooxygenase EthA (ethA) from Mycolicibacterium smegmatis (strain ATCC 700084 / mc(2)155) (Mycobacterium smegmatis).